Reading from the N-terminus, the 213-residue chain is Glutathione S-transferase PARB (213 aa).

Residues 1-82 (MAIKVHGSPM…YIAHVYADNG (82 aa)) form the GST N-terminal domain. Residues serine 11, 12–13 (TA), 40–41 (HK), 53–54 (QV), and 66–67 (ES) each bind glutathione. The 125-residue stretch at 89 to 213 (DPKKMPSMSV…WVKGLEKLQK (125 aa)) folds into the GST C-terminal domain.

It belongs to the GST superfamily. Phi family.

It catalyses the reaction RX + glutathione = an S-substituted glutathione + a halide anion + H(+). Its function is as follows. Conjugation of reduced glutathione to a wide number of exogenous and endogenous hydrophobic electrophiles. The chain is Glutathione S-transferase PARB from Nicotiana tabacum (Common tobacco).